A 926-amino-acid chain; its full sequence is Ubiquitin carboxyl-terminal hydrolase 4 (926 aa).

The Rhodanese domain maps to 205–328 (SQMEILLIDI…WLKSNYGRQV (124 aa)). Serine 443 carries the post-translational modification Phosphoserine. Residues 562 to 923 (VGLENLGNSC…NAYVLFYHRV (362 aa)) enclose the USP domain. The active-site Nucleophile is cysteine 571. Histidine 880 (proton acceptor) is an active-site residue.

This sequence belongs to the peptidase C19 family. As to quaternary structure, interacts with BRO1, RFU1 and VPS32. Associates with the 26S proteasome.

The protein resides in the cytoplasm. It is found in the late endosome membrane. It carries out the reaction Thiol-dependent hydrolysis of ester, thioester, amide, peptide and isopeptide bonds formed by the C-terminal Gly of ubiquitin (a 76-residue protein attached to proteins as an intracellular targeting signal).. With respect to regulation, RFU1 is an inhibitor of deubiquitination activity. Its function is as follows. Ubiquitin thioesterase that acts at the late endosome/prevacuolar compartment to recover ubiquitin from ubiquitinated membrane proteins en route to the vacuole. Also removes ubiquitin from soluble proteins targeted to proteasomes. Is essential to maintain a normal level of free ubiquitin. Involved in the ammonium-induced down-regulation of the GAP1 permease and the UME3 destruction in response to oxidative stress. Has a role in the RAD9 checkpoint response to TOP1 poisons. Required for promoting coordination of DNA replication and avoids DNA overreplication. This chain is Ubiquitin carboxyl-terminal hydrolase 4 (DOA4), found in Saccharomyces cerevisiae (strain ATCC 204508 / S288c) (Baker's yeast).